Consider the following 373-residue polypeptide: Response regulator aspartate phosphatase J (373 aa).

2 TPR repeats span residues 99-135 and 146-179; these read YYFYYFRGMYEFKQKNFILAIDHYKHAEEKLEYVEDE and AEVYYHIKQTYFSMNYASQALDIYTKYELYGRRR. L-glutamyl-L-arginyl-glycyl-L-methionyl-L-threonine is bound by residues E147, Y150, Q181, D192, Y217, N225, H228, Q260, Y297, K300, and D335. 2 TPR repeats span residues 220-253 and 259-292; these read AAAYYNVGHCKYSLGDYKEAEGYFKTAAAIFEEH and VQAVFSLTHIYCKEGKYDKAVEAYDRGIKSAAEW. The TPR 5 repeat unit spans residues 334 to 367; that stretch reads EDLLHDTAERFNQLEHYESAAFFYRRLMNIKKKL.

Belongs to the Rap family. In terms of assembly, monomer in solution. Homodimer.

The protein resides in the cytoplasm. Its activity is regulated as follows. Inhibited in vitro by the competence and sporulation stimulating factor (CSF), encoded by phrC. However, CSF has at least three targets (RapB, RapC, and RapJ) and the physiological importance of RapJ inhibition by CSF is unknown. Interaction with CSF induces a conformational change in RapJ. Functionally, involved in the regulation of sporulation. Acts as a phosphatase that specifically dephosphorylates the sporulation initiation phosphotransferase Spo0F and inhibits its activity. This Bacillus subtilis (strain 168) protein is Response regulator aspartate phosphatase J (rapJ).